Reading from the N-terminus, the 203-residue chain is Outer-membrane lipoprotein LolB (203 aa).

The N-terminal stretch at 1–20 is a signal peptide; the sequence is MNRSRRLALLCLGVPLLLQA. The N-palmitoyl cysteine moiety is linked to residue Cys21. Cys21 carries the S-diacylglycerol cysteine lipid modification.

This sequence belongs to the LolB family. Monomer.

The protein resides in the cell outer membrane. Its function is as follows. Plays a critical role in the incorporation of lipoproteins in the outer membrane after they are released by the LolA protein. The protein is Outer-membrane lipoprotein LolB of Cupriavidus taiwanensis (strain DSM 17343 / BCRC 17206 / CCUG 44338 / CIP 107171 / LMG 19424 / R1) (Ralstonia taiwanensis (strain LMG 19424)).